Reading from the N-terminus, the 406-residue chain is S-adenosylmethionine synthase (406 aa).

His-17 is an ATP binding site. Residue Asp-19 coordinates Mg(2+). A K(+)-binding site is contributed by Glu-45. The L-methionine site is built by Glu-58 and Gln-101. Residues 101–111 are flexible loop; sequence QSAEINQGVAR. ATP-binding positions include 178 to 180, Asp-258, 264 to 265, Ala-281, and Lys-285; these read DGK and RK. Residue Asp-258 coordinates L-methionine. Lys-289 lines the L-methionine pocket.

It belongs to the AdoMet synthase family. Homotetramer; dimer of dimers. Mg(2+) serves as cofactor. The cofactor is K(+).

The protein localises to the cytoplasm. It carries out the reaction L-methionine + ATP + H2O = S-adenosyl-L-methionine + phosphate + diphosphate. It functions in the pathway amino-acid biosynthesis; S-adenosyl-L-methionine biosynthesis; S-adenosyl-L-methionine from L-methionine: step 1/1. Its function is as follows. Catalyzes the formation of S-adenosylmethionine (AdoMet) from methionine and ATP. The overall synthetic reaction is composed of two sequential steps, AdoMet formation and the subsequent tripolyphosphate hydrolysis which occurs prior to release of AdoMet from the enzyme. The sequence is that of S-adenosylmethionine synthase from Bifidobacterium longum (strain NCC 2705).